The primary structure comprises 128 residues: Ribosome-binding factor A (128 aa).

Belongs to the RbfA family. Monomer. Binds 30S ribosomal subunits, but not 50S ribosomal subunits or 70S ribosomes.

The protein localises to the cytoplasm. Its function is as follows. One of several proteins that assist in the late maturation steps of the functional core of the 30S ribosomal subunit. Associates with free 30S ribosomal subunits (but not with 30S subunits that are part of 70S ribosomes or polysomes). Required for efficient processing of 16S rRNA. May interact with the 5'-terminal helix region of 16S rRNA. This is Ribosome-binding factor A from Geobacillus thermodenitrificans (strain NG80-2).